A 35-amino-acid polypeptide reads, in one-letter code: Alpha-amanitin proprotein (35 aa).

A propeptide spanning residues 1 to 10 (MSDINATRLP) is cleaved from the precursor. Ile11 carries the post-translational modification (3R,4R)-4,5-dihydroxyisoleucine; in form alpha-amanitin. Ile11 is modified ((3R,4S)-4-hydroxyisoleucine; in form gamma-amanitin). A cross-link (cyclopeptide (Ile-Pro)) is located at residues 11–18 (IWGIGCNP). The segment at residues 12-16 (WGIGC) is a cross-link (2'-cysteinyl-6'-hydroxytryptophan sulfoxide (Trp-Cys)). Pro18 carries the post-translational modification 4-hydroxyproline. Positions 19 to 35 (CVGDDVTTLLTRGEALC) are excised as a propeptide.

This sequence belongs to the MSDIN fungal toxin family. Processed by the macrocyclase-peptidase enzyme POPB to yield a toxic cyclic decapeptide. POPB first removes 10 residues from the N-terminus. Conformational trapping of the remaining peptide forces the enzyme to release this intermediate rather than proceed to macrocyclization. The enzyme rebinds the remaining peptide in a different conformation and catalyzes macrocyclization of the N-terminal 8 residues.

In terms of biological role, major toxin belonging to the bicyclic octapeptides amatoxins that acts by binding non-competitively to RNA polymerase II and greatly slowing the elongation of transcripts from target promoters. In Amanita bisporigera (Destroying angel), this protein is Alpha-amanitin proprotein.